A 4760-amino-acid polypeptide reads, in one-letter code: Nonribosomal peptide synthetase cm3A (4760 aa).

Polar residues predominate over residues 1–12 (MKHLASSENMPT). Residues 1 to 24 (MKHLASSENMPTPAQDRAPSPSAM) are disordered. One can recognise a Carrier 1 domain in the interval 19–95 (PSPSAMQQEI…ELSRSAECQL (77 aa)). Position 56 is an O-(pantetheine 4'-phosphoryl)serine (serine 56). Condensation stretches follow at residues 142–570 (QDIF…EIEQ) and 178–571 (PGLS…IEQL). The tract at residues 591-984 (DEQARLCPDA…GRRDTQVKLR (394 aa)) is adenylation 1. The Carrier 2 domain occupies 1120 to 1197 (REATTLQLQI…KLTEKLGVPE (78 aa)). Serine 1158 is subject to O-(pantetheine 4'-phosphoryl)serine. Condensation stretches follow at residues 1210-1654 (FPLS…KTPS) and 1689-2125 (VEDM…NVTT). The segment at 2171–2551 (DGDLTYFELD…DRKDWQIKIR (381 aa)) is adenylation 2. One can recognise a Carrier 3 domain in the interval 2684 to 2762 (LPSSETEKTV…ELAHAIDQRS (79 aa)). O-(pantetheine 4'-phosphoryl)serine is present on serine 2721. The interval 2811–3203 (VEDIYPCTPL…RFKHIFGQLS (393 aa)) is condensation 4. The tract at residues 3255 to 3647 (SATTPDRPAV…GRADQQLKIR (393 aa)) is adenylation 3. The Carrier 4 domain maps to 3783–3857 (TRTEELMQSV…QLAQRATTDA (75 aa)). Condensation regions lie at residues 3869-4296 (EFRL…TLLC) and 4340-4757 (EDIY…EEMG).

This sequence belongs to the nrps family.

The protein operates within secondary metabolite biosynthesis. Nonribosomal peptide synthetase; part of the gene cluster that mediates the biosynthesis of beauveriolides I and III, cyclodepsipeptides acting as inhibitors of the acyl-CoA:cholesterol acyltransferase. The HR-PKS cm3B initiates the biosynthesis of beauveriolides by iteratively catalyzing the formation of the linear polyketide chain. The ATP-dependent acetyl-CoA ligase cm3D converts the polyketide carboxylic acid to a CoA thioester which id shuttled to the first T domain in the NRPS cm3A by the acetyltransferase cm3C. Cm3A contains 13 domains and assembles the polyketide chain, L-phenylalanine, L-alanine, and D-leucine (or D-allo-isoleucine) to form beauveriolide I (or beauveriolide III). The production of both beauveriolides I and III suggests the substrate adaptability of cm3B, using different amino acids as substrates. The protein is Nonribosomal peptide synthetase cm3A of Cordyceps militaris (strain CM01) (Caterpillar fungus).